Consider the following 489-residue polypeptide: Serotonin-gated chloride channel mod-1 (489 aa).

The signal sequence occupies residues Met-1–Ala-20. Over Lys-21 to Gly-240 the chain is Extracellular. 3 N-linked (GlcNAc...) asparagine glycosylation sites follow: Asn-44, Asn-103, and Asn-144. Serotonin-binding residues include Tyr-180 and Trp-226. 3 helical membrane-spanning segments follow: residues Phe-241–Phe-261, Val-274–Pro-294, and Val-304–Cys-324. Residues Tyr-325–Lys-458 lie on the Cytoplasmic side of the membrane. The interval Gly-365–Asn-398 is disordered. Over residues His-372–Gly-391 the composition is skewed to polar residues. Residues Phe-459–Tyr-479 traverse the membrane as a helical segment.

Belongs to the ligand-gated ion channel (TC 1.A.9) family. In terms of tissue distribution, expressed in a subset of muscles, and head and tail neurons, including RME and GABAergic ventral nerve cord neurons. Expressed in AIY, RME, RID, RIF, ASI, DD1-6, and PVN neurons.

Its subcellular location is the membrane. It is found in the cell membrane. Its function is as follows. Functions as a 5-hydroxytryptamine (serotonin) receptor. This receptor is a ligand-gated anion-specific ion channel, selective for chloride ions. Relays a long-range endocrine signal from the body cavity neurons to modulate distal adipose triglyceride lipase atgl-1 function, via the nuclear receptor nhr-76. Together with the G-protein coupled serotonin receptor ser-1 involved in male mating behavior. May mediate an inhibitory effect of serotonin on egg laying. Involved in regulating locomotory behavior, perhaps by modulating interneuronal signaling, acting in concert with G-protein coupled serotonin receptor ser-4. In the presence of food, plays a role in initiating and extending dwelling behavior, perhaps acting in AIY, RIF and ASI neurons, in opposition to neuropeptide PDF-mediated signaling. Plays a role in aversive learning upon exposure to pathogens such as Gram-negative bacterium P.aeruginosa strain PA14; perhaps acting in interneurons in response to serotonin released by the serotonergic ADF neurons. This is Serotonin-gated chloride channel mod-1 from Caenorhabditis elegans.